The primary structure comprises 444 residues: Argininosuccinate synthase (444 aa).

ATP contacts are provided by residues 17 to 25 and Ala-43; that span reads AFSGGLDTS. Tyr-99 is an L-citrulline binding site. ATP is bound by residues Gly-129 and Thr-131. L-aspartate-binding residues include Thr-131, Asn-135, and Asp-136. Residue Asn-135 coordinates L-citrulline. Asp-136 provides a ligand contact to ATP. L-citrulline contacts are provided by Arg-139 and Ser-192. Asp-194 is an ATP binding site. L-citrulline is bound by residues Thr-201, Glu-203, and Glu-280.

The protein belongs to the argininosuccinate synthase family. Type 2 subfamily. In terms of assembly, homotetramer.

The protein localises to the cytoplasm. The catalysed reaction is L-citrulline + L-aspartate + ATP = 2-(N(omega)-L-arginino)succinate + AMP + diphosphate + H(+). The protein operates within amino-acid biosynthesis; L-arginine biosynthesis; L-arginine from L-ornithine and carbamoyl phosphate: step 2/3. The protein is Argininosuccinate synthase of Paraburkholderia phymatum (strain DSM 17167 / CIP 108236 / LMG 21445 / STM815) (Burkholderia phymatum).